The sequence spans 121 residues: Large ribosomal subunit protein bL12 (121 aa).

This sequence belongs to the bacterial ribosomal protein bL12 family. In terms of assembly, homodimer. Part of the ribosomal stalk of the 50S ribosomal subunit. Forms a multimeric L10(L12)X complex, where L10 forms an elongated spine to which 2 to 4 L12 dimers bind in a sequential fashion. Binds GTP-bound translation factors.

Its function is as follows. Forms part of the ribosomal stalk which helps the ribosome interact with GTP-bound translation factors. Is thus essential for accurate translation. The protein is Large ribosomal subunit protein bL12 of Pectobacterium atrosepticum (strain SCRI 1043 / ATCC BAA-672) (Erwinia carotovora subsp. atroseptica).